The following is a 129-amino-acid chain: Small ribosomal subunit protein bS6 (129 aa).

This sequence belongs to the bacterial ribosomal protein bS6 family.

Its function is as follows. Binds together with bS18 to 16S ribosomal RNA. This chain is Small ribosomal subunit protein bS6, found in Microcystis aeruginosa (strain NIES-843 / IAM M-2473).